The chain runs to 537 residues: 2-succinyl-5-enolpyruvyl-6-hydroxy-3-cyclohexene-1-carboxylate synthase (537 aa).

The protein belongs to the TPP enzyme family. MenD subfamily. In terms of assembly, homodimer. Mg(2+) serves as cofactor. Requires Mn(2+) as cofactor. It depends on thiamine diphosphate as a cofactor.

The enzyme catalyses isochorismate + 2-oxoglutarate + H(+) = 5-enolpyruvoyl-6-hydroxy-2-succinyl-cyclohex-3-ene-1-carboxylate + CO2. It participates in quinol/quinone metabolism; 1,4-dihydroxy-2-naphthoate biosynthesis; 1,4-dihydroxy-2-naphthoate from chorismate: step 2/7. The protein operates within quinol/quinone metabolism; menaquinone biosynthesis. In terms of biological role, catalyzes the thiamine diphosphate-dependent decarboxylation of 2-oxoglutarate and the subsequent addition of the resulting succinic semialdehyde-thiamine pyrophosphate anion to isochorismate to yield 2-succinyl-5-enolpyruvyl-6-hydroxy-3-cyclohexene-1-carboxylate (SEPHCHC). The chain is 2-succinyl-5-enolpyruvyl-6-hydroxy-3-cyclohexene-1-carboxylate synthase from Nocardioides sp. (strain ATCC BAA-499 / JS614).